Here is a 340-residue protein sequence, read N- to C-terminus: Aurora kinase A- and ninein-interacting protein (340 aa).

Residues 175 to 340 (QREAKRKGEG…DSEGNRVIRH (166 aa)) are interaction with AURKA. The span at 178–190 (AKRKGEGLRESKT) shows a compositional bias: basic and acidic residues. The segment at 178-209 (AKRKGEGLRESKTDCPGMGSHIRPPGSKCHQP) is disordered. The interaction with RBBP8/CtIP stretch occupies residues 266 to 340 (RDSWSQLFTE…DSEGNRVIRH (75 aa)). A Phosphoserine modification is found at serine 277. The disordered stretch occupies residues 293 to 317 (DVTNARNQGSGQFPDSPQAQGQDGP). Over residues 296–313 (NARNQGSGQFPDSPQAQG) the composition is skewed to polar residues.

This sequence belongs to the AUNIP family. As to quaternary structure, interacts (via C-terminus) with AURKA (via C-terminus). Interacts (via N-terminus) with NIN; this interaction blocks NIN phosphorylation by both AURKA and GSK3B. Identified in a complex with NIN and AURKA. Interacts with RBBP8/CtIP.

The protein localises to the nucleus. The protein resides in the chromosome. It localises to the cytoplasm. It is found in the cytoskeleton. Its subcellular location is the microtubule organizing center. The protein localises to the centrosome. The protein resides in the spindle pole. In terms of biological role, DNA-binding protein that accumulates at DNA double-strand breaks (DSBs) following DNA damage and promotes DNA resection and homologous recombination. Serves as a sensor of DNA damage: binds DNA with a strong preference for DNA substrates that mimic structures generated at stalled replication forks, and anchors RBBP8/CtIP to DSB sites to promote DNA end resection and ensuing homologous recombination repair. Inhibits non-homologous end joining (NHEJ). Required for the dynamic movement of AURKA at the centrosomes and spindle apparatus during the cell cycle. This chain is Aurora kinase A- and ninein-interacting protein, found in Mus musculus (Mouse).